Here is a 293-residue protein sequence, read N- to C-terminus: Large ribosomal subunit protein uL18 (293 aa).

Residues 249–273 (DASPAAKKAAKPSKRHTAKRLTYDE) are disordered. A compositionally biased stretch (basic residues) spans 256 to 267 (KAAKPSKRHTAK).

The protein belongs to the universal ribosomal protein uL18 family. Component of the large ribosomal subunit (LSU).

Its subcellular location is the cytoplasm. It is found in the nucleus. In terms of biological role, component of the ribosome, a large ribonucleoprotein complex responsible for the synthesis of proteins in the cell. The small ribosomal subunit (SSU) binds messenger RNAs (mRNAs) and translates the encoded message by selecting cognate aminoacyl-transfer RNA (tRNA) molecules. The large subunit (LSU) contains the ribosomal catalytic site termed the peptidyl transferase center (PTC), which catalyzes the formation of peptide bonds, thereby polymerizing the amino acids delivered by tRNAs into a polypeptide chain. The nascent polypeptides leave the ribosome through a tunnel in the LSU and interact with protein factors that function in enzymatic processing, targeting, and the membrane insertion of nascent chains at the exit of the ribosomal tunnel. The chain is Large ribosomal subunit protein uL18 (rpl-5) from Caenorhabditis elegans.